The chain runs to 103 residues: Large ribosomal subunit protein bL21 (103 aa).

It belongs to the bacterial ribosomal protein bL21 family. Part of the 50S ribosomal subunit. Contacts protein L20.

Functionally, this protein binds to 23S rRNA in the presence of protein L20. In Shewanella denitrificans (strain OS217 / ATCC BAA-1090 / DSM 15013), this protein is Large ribosomal subunit protein bL21.